Reading from the N-terminus, the 371-residue chain is uncharacterized protein (371 aa).

Residues 287-323 adopt a coiled-coil conformation; it reads EVVTALDRYRQHLRETRERLEEKQGKLLEELKGYESM.

This is an uncharacterized protein from Aspergillus fumigatus (strain ATCC MYA-4609 / CBS 101355 / FGSC A1100 / Af293) (Neosartorya fumigata).